A 981-amino-acid chain; its full sequence is Beta-glucuronidase (981 aa).

E500 (nucleophile) is an active-site residue. Mg(2+) contacts are provided by N561, W562, I563, S581, and E583.

This sequence belongs to the glycosyl hydrolase 2 family.

The protein resides in the periplasm. The catalysed reaction is a beta-D-glucuronoside + H2O = D-glucuronate + an alcohol. Its function is as follows. Beta-glucuronidase involved in ulvan degradation. Ulvan is the main polysaccharide component of the Ulvales (green seaweed) cell wall. It is composed of disaccharide building blocks comprising 3-sulfated rhamnose (Rha3S) linked to D-glucuronic acid (GlcA), L-iduronic acid (IduA), or D-xylose (Xyl). Beta-glucuronidase removes GlcA side chains present on some O2 residues of Rha3S. Can remove the GlcA side chains from polymeric ulvan or from smaller oligomers. The sequence is that of Beta-glucuronidase from Formosa agariphila (strain DSM 15362 / KCTC 12365 / LMG 23005 / KMM 3901 / M-2Alg 35-1).